Reading from the N-terminus, the 360-residue chain is 3-dehydroquinate synthase (360 aa).

Residues 69–74 (DGEAYK), 103–107 (GVIGD), 127–128 (TT), lysine 140, lysine 149, and 167–170 (CLQT) contribute to the NAD(+) site. Residues glutamate 182, histidine 245, and histidine 262 each coordinate Zn(2+).

It belongs to the sugar phosphate cyclases superfamily. Dehydroquinate synthase family. Co(2+) is required as a cofactor. It depends on Zn(2+) as a cofactor. Requires NAD(+) as cofactor.

It localises to the cytoplasm. The enzyme catalyses 7-phospho-2-dehydro-3-deoxy-D-arabino-heptonate = 3-dehydroquinate + phosphate. It participates in metabolic intermediate biosynthesis; chorismate biosynthesis; chorismate from D-erythrose 4-phosphate and phosphoenolpyruvate: step 2/7. Functionally, catalyzes the conversion of 3-deoxy-D-arabino-heptulosonate 7-phosphate (DAHP) to dehydroquinate (DHQ). The chain is 3-dehydroquinate synthase from Aeromonas hydrophila subsp. hydrophila (strain ATCC 7966 / DSM 30187 / BCRC 13018 / CCUG 14551 / JCM 1027 / KCTC 2358 / NCIMB 9240 / NCTC 8049).